Here is a 620-residue protein sequence, read N- to C-terminus: Probable potassium transport system protein Kup (620 aa).

The next 12 helical transmembrane spans lie at 11–31 (LAFL…LYAF), 51–71 (ILSL…LLLV), 100–120 (IAML…VITP), 138–158 (LAPY…AVQA), 167–187 (FFAP…AHAI), 202–222 (AVHF…LVVL), 246–266 (WFAL…AYLL), 288–308 (LILL…SGIF), 334–354 (GQIY…FVML), 364–384 (AAYG…LVLV), 396–416 (VVTI…STST), and 418–438 (LMEG…VMYI).

Belongs to the HAK/KUP transporter (TC 2.A.72) family.

The protein resides in the cell inner membrane. It carries out the reaction K(+)(in) + H(+)(in) = K(+)(out) + H(+)(out). Functionally, transport of potassium into the cell. Likely operates as a K(+):H(+) symporter. In Vibrio cholerae serotype O1 (strain ATCC 39315 / El Tor Inaba N16961), this protein is Probable potassium transport system protein Kup.